The following is a 265-amino-acid chain: Undecaprenyl-diphosphatase (265 aa).

A run of 8 helical transmembrane segments spans residues 1–21, 39–59, 86–106, 112–132, 140–160, 186–206, 219–239, and 244–264; these read MDILHAVFLALIQGITEFLPI, QGLAFDVAVHVGTLSAVILYF, WCIIVATVPAGLFGLLLGNFI, SVSVIATTTVVFGLLLWFADA, LAQMTLFIALVIGLAQALAMI, FSFLLSIPIITLSGGYMGLKL, VGVLVSAISAYICIHYFLSFI, and MLPFVIYRLLLGAGLFALVWF.

Belongs to the UppP family.

It localises to the cell inner membrane. It carries out the reaction di-trans,octa-cis-undecaprenyl diphosphate + H2O = di-trans,octa-cis-undecaprenyl phosphate + phosphate + H(+). Catalyzes the dephosphorylation of undecaprenyl diphosphate (UPP). Confers resistance to bacitracin. This Saccharophagus degradans (strain 2-40 / ATCC 43961 / DSM 17024) protein is Undecaprenyl-diphosphatase.